Reading from the N-terminus, the 532-residue chain is O-phosphoserine--tRNA(Cys) ligase (532 aa).

Substrate is bound by residues 186–188 (HMT), 231–233 (SAS), 273–274 (YY), and Asn317.

It belongs to the class-II aminoacyl-tRNA synthetase family. O-phosphoseryl-tRNA(Cys) synthetase subfamily. In terms of assembly, homotetramer. Interacts with SepCysS.

The enzyme catalyses tRNA(Cys) + O-phospho-L-serine + ATP = O-phospho-L-seryl-tRNA(Cys) + AMP + diphosphate. Catalyzes the attachment of O-phosphoserine (Sep) to tRNA(Cys). The sequence is that of O-phosphoserine--tRNA(Cys) ligase from Methanothermobacter thermautotrophicus (strain ATCC 29096 / DSM 1053 / JCM 10044 / NBRC 100330 / Delta H) (Methanobacterium thermoautotrophicum).